A 117-amino-acid chain; its full sequence is Large ribosomal subunit protein uL18 (117 aa).

This sequence belongs to the universal ribosomal protein uL18 family. Part of the 50S ribosomal subunit; part of the 5S rRNA/L5/L18/L25 subcomplex. Contacts the 5S and 23S rRNAs.

In terms of biological role, this is one of the proteins that bind and probably mediate the attachment of the 5S RNA into the large ribosomal subunit, where it forms part of the central protuberance. The sequence is that of Large ribosomal subunit protein uL18 from Vibrio vulnificus (strain CMCP6).